The following is a 227-amino-acid chain: Isopentenyl-diphosphate Delta-isomerase 1 (227 aa).

Lys-36 lines the substrate pocket. Mg(2+) is bound by residues His-40 and His-51. The Nudix hydrolase domain maps to 49-199; the sequence is LLHRAFSVFL…EVKLTPWFKI (151 aa). Substrate is bound by residues Arg-70 and Lys-74. Cys-86 is an active-site residue. Ser-87 serves as a coordination point for substrate. Residues Glu-146 and Glu-148 each coordinate Mg(2+). Glu-148 is a catalytic residue. Lys-176 is subject to N6-acetyllysine. A Microbody targeting signal motif is present at residues 225 to 227; that stretch reads HRM.

Belongs to the IPP isomerase type 1 family. As to quaternary structure, monomer. Mg(2+) is required as a cofactor.

Its subcellular location is the peroxisome. The enzyme catalyses isopentenyl diphosphate = dimethylallyl diphosphate. It participates in isoprenoid biosynthesis; dimethylallyl diphosphate biosynthesis; dimethylallyl diphosphate from isopentenyl diphosphate: step 1/1. Catalyzes the 1,3-allylic rearrangement of the homoallylic substrate isopentenyl (IPP) to its highly electrophilic allylic isomer, dimethylallyl diphosphate (DMAPP). This Mesocricetus auratus (Golden hamster) protein is Isopentenyl-diphosphate Delta-isomerase 1 (IDI1).